Here is a 335-residue protein sequence, read N- to C-terminus: tRNA methyltransferase 10 homolog A (335 aa).

Disordered stretches follow at residues methionine 1–arginine 91 and valine 279–glutamine 335. 2 positions are modified to phosphoserine: serine 22 and serine 24. Residues arginine 52–lysine 62 show a composition bias toward basic and acidic residues. The stretch at arginine 52–serine 84 forms a coiled coil. A compositionally biased stretch (basic residues) spans glutamate 63 to glutamate 75. The SAM-dependent MTase TRM10-type domain occupies aspartate 88 to valine 279. Residues glutamate 304 to glutamine 319 show a composition bias toward basic and acidic residues. The span at glutamine 320–glutamine 335 shows a compositional bias: low complexity. At serine 331 the chain carries Phosphoserine.

The protein belongs to the class IV-like SAM-binding methyltransferase superfamily. TRM10 family. In terms of assembly, interacts with tRNA. As to expression, ubiquitously expressed. Is more abundant in brain and pancreatic islets compared to other tissues (at protein level).

It localises to the nucleus. It is found in the nucleolus. It carries out the reaction guanosine(9) in tRNA + S-adenosyl-L-methionine = N(1)-methylguanosine(9) in tRNA + S-adenosyl-L-homocysteine + H(+). S-adenosyl-L-methionine-dependent guanine N(1)-methyltransferase that catalyzes the formation of N(1)-methylguanine at position 9 (m1G9) in tRNAs. Probably not able to catalyze formation of N(1)-methyladenine at position 9 (m1A9) in tRNAs. The sequence is that of tRNA methyltransferase 10 homolog A (Trmt10a) from Rattus norvegicus (Rat).